Consider the following 305-residue polypeptide: HTH-type transcriptional activator BauR (305 aa).

The HTH lysR-type domain occupies 15-72 (FDIRLLRIFKTIVECGSFSAAESTLGLSRSAISLHMGDLEKRLGMRLCQRGRAGFALT).

It belongs to the LysR transcriptional regulatory family.

In terms of biological role, involved in the degradation of beta-alanine. BauR activates the transcription of the bauABCD operon. The chain is HTH-type transcriptional activator BauR (bauR) from Pseudomonas aeruginosa (strain ATCC 15692 / DSM 22644 / CIP 104116 / JCM 14847 / LMG 12228 / 1C / PRS 101 / PAO1).